Here is a 288-residue protein sequence, read N- to C-terminus: Alpha/beta hydrolase domain-containing protein 17B (288 aa).

Active-site charge relay system residues include S170, D235, and H264.

It belongs to the AB hydrolase superfamily. ABHD17 family. Palmitoylated on cysteine residues located in a cysteine cluster at the N-terminus which promotes membrane localization.

It is found in the cell membrane. Its subcellular location is the recycling endosome membrane. It localises to the cell projection. The protein resides in the dendritic spine. The protein localises to the postsynaptic density membrane. The catalysed reaction is S-hexadecanoyl-L-cysteinyl-[protein] + H2O = L-cysteinyl-[protein] + hexadecanoate + H(+). Its function is as follows. Hydrolyzes fatty acids from S-acylated cysteine residues in proteins. Has depalmitoylating activity towards NRAS. This Gallus gallus (Chicken) protein is Alpha/beta hydrolase domain-containing protein 17B.